Here is a 282-residue protein sequence, read N- to C-terminus: Hydrogenase expression/formation protein HoxQ (282 aa).

Belongs to the HupH/HyaF family.

In Cupriavidus necator (strain ATCC 17699 / DSM 428 / KCTC 22496 / NCIMB 10442 / H16 / Stanier 337) (Ralstonia eutropha), this protein is Hydrogenase expression/formation protein HoxQ (hoxQ).